We begin with the raw amino-acid sequence, 876 residues long: Alanine--tRNA ligase (876 aa).

Zn(2+)-binding residues include His-564, His-568, Cys-666, and His-670.

The protein belongs to the class-II aminoacyl-tRNA synthetase family. Homotetramer. Zn(2+) serves as cofactor.

The protein localises to the cytoplasm. It carries out the reaction tRNA(Ala) + L-alanine + ATP = L-alanyl-tRNA(Ala) + AMP + diphosphate. In terms of biological role, catalyzes the attachment of alanine to tRNA(Ala) in a two-step reaction: alanine is first activated by ATP to form Ala-AMP and then transferred to the acceptor end of tRNA(Ala). Also edits incorrectly charged Ser-tRNA(Ala) and Gly-tRNA(Ala) via its editing domain. The chain is Alanine--tRNA ligase from Salmonella typhi.